Here is a 445-residue protein sequence, read N- to C-terminus: Tubulin beta chain (445 aa).

The MREI motif motif lies at 1–4; sequence MREI. GTP contacts are provided by Gln11, Glu69, Ser138, Gly142, Thr143, Gly144, Asn204, and Asn226. Glu69 lines the Mg(2+) pocket. The disordered stretch occupies residues 421 to 445; sequence EYQQYQDATAEEEGEGEEEGDEEVA. Residues 429–445 are compositionally biased toward acidic residues; that stretch reads TAEEEGEGEEEGDEEVA. Glu438 carries the 5-glutamyl polyglutamate modification.

It belongs to the tubulin family. In terms of assembly, dimer of alpha and beta chains. A typical microtubule is a hollow water-filled tube with an outer diameter of 25 nm and an inner diameter of 15 nM. Alpha-beta heterodimers associate head-to-tail to form protofilaments running lengthwise along the microtubule wall with the beta-tubulin subunit facing the microtubule plus end conferring a structural polarity. Microtubules usually have 13 protofilaments but different protofilament numbers can be found in some organisms and specialized cells. It depends on Mg(2+) as a cofactor. Some glutamate residues at the C-terminus are polyglycylated, resulting in polyglycine chains on the gamma-carboxyl group. Glycylation is mainly limited to tubulin incorporated into axonemes (cilia and flagella) whereas glutamylation is prevalent in neuronal cells, centrioles, axonemes, and the mitotic spindle. Both modifications can coexist on the same protein on adjacent residues, and lowering polyglycylation levels increases polyglutamylation, and reciprocally. The precise function of polyglycylation is still unclear. In terms of processing, some glutamate residues at the C-terminus are polyglutamylated, resulting in polyglutamate chains on the gamma-carboxyl group. Polyglutamylation plays a key role in microtubule severing by spastin (SPAST). SPAST preferentially recognizes and acts on microtubules decorated with short polyglutamate tails: severing activity by SPAST increases as the number of glutamates per tubulin rises from one to eight, but decreases beyond this glutamylation threshold. In terms of tissue distribution, brain.

It is found in the cytoplasm. The protein localises to the cytoskeleton. Functionally, tubulin is the major constituent of microtubules, a cylinder consisting of laterally associated linear protofilaments composed of alpha- and beta-tubulin heterodimers. Microtubules grow by the addition of GTP-tubulin dimers to the microtubule end, where a stabilizing cap forms. Below the cap, tubulin dimers are in GDP-bound state, owing to GTPase activity of alpha-tubulin. The protein is Tubulin beta chain of Pseudopleuronectes americanus (Winter flounder).